Consider the following 1004-residue polypeptide: MSFFKKKLSKGKEILSKSNLKTHTSSNASLSIDDLNRFGFSLNPVLWCLDHQQGLLAIVSSTNRIYIYGKQHVQSVIVPDCSTIVHIALCAAYLIVIDSRNTVLSYPLMKHRDLSKPAATYFLKQKVTCTVTDPTIDWVFFGMSDGSVVPWDVTRHCLGKFKVPNLYVPRHEEWRMMGYSYAPVPGKLSPVVSVQIHPKDLGVILIAYPDGVVLYSIRTDEVIRFYELEYAPGSTAAVLSPHNYRRPIVKGIEWSPWGDHFVSYYTDSTFAFWDVDQEYPVQVRNFVDSNIHTYTPMQRNPPKTELEPIRSMRWCCCEDPTVSFILMLGGLPKEAPVKGISLFSYRNLPAKKDVETFAEFFANPNSQRFFPFIDIPPVRDMLVIPSSSPHYNGSHNPKNLLLLSEDNSLSLLDISTGNISNMSLSIPPSLCFLASDFRVIAFQTVTKKVWNQIEDTISVNSHYSCLFGGSPSPGYLKKLDERNLLITSTGLSLSIWDISQGFMNPSLCVNLDFSSVMRKHLTPSAFITTASFSTYNPEFSCADSFGRVIVCKRKNHKENLPAQLANGIYRLDDTLVLEGTLHAQYYIDLKRGRVTLNQMSNIGFVCIGYQDGGITIIDMRGPHILCNTSISELGLERRGKPDPDFLTSAEFVVMNPKGSPSSIYVVTGTYRGMTLLFRIDPSSSGRFSAYFESSRQLDIKNIYKICSLTQDGQIATATGSSLQSVGYPLPQEVFLVYIGDSGISVFNKINNQVGNLDWRKPVCCRAALVLSTVSKHMGSVVCVNSDLSVNWYSLPNLREERKMQLPLDIDKNRLKEGDILGNGDYIFPTLGAHELAFGCVLGSGRTLANLAPMMLITHNASHVPPRPSKSLWNWLLGEQSTSAEELDILLGGENRAESKVHTLETPKVISARPAESVKQPLTPVPSMTSQSAQSYIPPRRQQQQKGFFAQINDHLAQRGNMLGGIENTMDDLEEMSAEWANEIKDSLAGTKKDLILSGLKSYIP.

An N-linked (GlcNAc...) asparagine glycan is attached at asparagine 27. 4 helical membrane passes run 38-58 (FGFSLNPVLWCLDHQQGLLAI), 77-97 (IVPDCSTIVHIALCAAYLIVI), 188-208 (LSPVVSVQIHPKDLGVILIAY), and 324-344 (FILMLGGLPKEAPVKGISLFS). Asparagine 392, asparagine 418, and asparagine 421 each carry an N-linked (GlcNAc...) asparagine glycan. The next 2 membrane-spanning stretches (helical) occupy residues 422-442 (MSLSIPPSLCFLASDFRVIAF) and 599-619 (MSNIGFVCIGYQDGGITIIDM). N-linked (GlcNAc...) asparagine glycosylation is present at asparagine 627. 2 helical membrane passes run 726-746 (GYPLPQEVFLVYIGDSGISVF) and 823-843 (GDYIFPTLGAHELAFGCVLGS). Asparagine 859 is a glycosylation site (N-linked (GlcNAc...) asparagine).

To yeast YPR031w.

The protein resides in the membrane. This is an uncharacterized protein from Schizosaccharomyces pombe (strain 972 / ATCC 24843) (Fission yeast).